Reading from the N-terminus, the 215-residue chain is Cytochrome b6 (215 aa).

Residues 32-52 (IFYCLGGITLTCFLVQVATGF) form a helical membrane-spanning segment. Heme c is bound at residue C35. 2 residues coordinate heme b: H86 and H100. The next 3 membrane-spanning stretches (helical) occupy residues 90 to 110 (ASMMVLMMILHVFRVYLTGGF), 116 to 136 (LTWVTGVVLGVLTASFGVTGY), and 186 to 206 (LHTFVLPLLTAVFMLMHFLMI). Heme b-binding residues include H187 and H202.

This sequence belongs to the cytochrome b family. PetB subfamily. As to quaternary structure, the 4 large subunits of the cytochrome b6-f complex are cytochrome b6, subunit IV (17 kDa polypeptide, PetD), cytochrome f and the Rieske protein, while the 4 small subunits are PetG, PetL, PetM and PetN. The complex functions as a dimer. It depends on heme b as a cofactor. The cofactor is heme c.

Its subcellular location is the plastid. The protein localises to the chloroplast thylakoid membrane. In terms of biological role, component of the cytochrome b6-f complex, which mediates electron transfer between photosystem II (PSII) and photosystem I (PSI), cyclic electron flow around PSI, and state transitions. This Arabidopsis thaliana (Mouse-ear cress) protein is Cytochrome b6.